The chain runs to 1167 residues: ATP-dependent helicase/nuclease subunit A (1167 aa).

In terms of domain architecture, UvrD-like helicase ATP-binding spans 2-451; the sequence is KNWTAEQMRA…IELSLNFRSR (450 aa). 23 to 30 is an ATP binding site; the sequence is AAAGAGKT. In terms of domain architecture, UvrD-like helicase C-terminal spans 478–768; sequence KAFLKKGADY…RVMSVHKSKG (291 aa).

It belongs to the helicase family. AddA subfamily. As to quaternary structure, heterodimer of AddA and AddB/RexB. Requires Mg(2+) as cofactor.

It carries out the reaction Couples ATP hydrolysis with the unwinding of duplex DNA by translocating in the 3'-5' direction.. The catalysed reaction is ATP + H2O = ADP + phosphate + H(+). Functionally, the heterodimer acts as both an ATP-dependent DNA helicase and an ATP-dependent, dual-direction single-stranded exonuclease. Recognizes the chi site generating a DNA molecule suitable for the initiation of homologous recombination. The AddA nuclease domain is required for chi fragment generation; this subunit has the helicase and 3' -&gt; 5' nuclease activities. In Carboxydothermus hydrogenoformans (strain ATCC BAA-161 / DSM 6008 / Z-2901), this protein is ATP-dependent helicase/nuclease subunit A.